A 346-amino-acid polypeptide reads, in one-letter code: MKGLPALLLLLIGCVSSFGSQDVPLRVLAEKLNIHIGFAAGNNFWSLPDAEKYMEVAKREFNILTPGNQMKWDTIHPERNRYNFEPAEKHVEFALKNDMIVHGHTLVWHNQLPGWLTGQEWSKEELLNILEDHVKTVVSHFRGRVKIWDVVNEAVSDSGTYRESIWYRTIGPEYIEKALIWAKEADPDAILIYNDYNIEEINAKSNFVYNMIKNLREKGVPIDGIGFQMHIDYRGINYESFKKNLERFAELGLQIYITEMDRGFPLGGSVGYYLKKQAEVYRRIFEICLDNPAVRAIQFWGFTDKYSWVPGFFKGYGKALIFDENYNPKPCYFAIRELMEEKLKER.

Positions 1 to 19 (MKGLPALLLLLIGCVSSFG) are cleaved as a signal peptide. One can recognise a GH10 domain in the interval 41–338 (GNNFWSLPDA…KPCYFAIREL (298 aa)). Catalysis depends on glutamate 153, which acts as the Proton donor. Glutamate 259 functions as the Nucleophile in the catalytic mechanism.

This sequence belongs to the glycosyl hydrolase 10 (cellulase F) family.

It catalyses the reaction Endohydrolysis of (1-&gt;4)-beta-D-xylosidic linkages in xylans.. The protein is Endo-1,4-beta-xylanase B (xynB) of Thermotoga neapolitana.